Reading from the N-terminus, the 355-residue chain is UDP-N-acetylglucosamine--N-acetylmuramyl-(pentapeptide) pyrophosphoryl-undecaprenol N-acetylglucosamine transferase (355 aa).

UDP-N-acetyl-alpha-D-glucosamine-binding positions include 15–17, Asn-127, Arg-163, Ser-191, Ile-244, 263–268, and Gln-288; these read TGG and ALTVSE.

This sequence belongs to the glycosyltransferase 28 family. MurG subfamily.

It localises to the cell inner membrane. The catalysed reaction is di-trans,octa-cis-undecaprenyl diphospho-N-acetyl-alpha-D-muramoyl-L-alanyl-D-glutamyl-meso-2,6-diaminopimeloyl-D-alanyl-D-alanine + UDP-N-acetyl-alpha-D-glucosamine = di-trans,octa-cis-undecaprenyl diphospho-[N-acetyl-alpha-D-glucosaminyl-(1-&gt;4)]-N-acetyl-alpha-D-muramoyl-L-alanyl-D-glutamyl-meso-2,6-diaminopimeloyl-D-alanyl-D-alanine + UDP + H(+). Its pathway is cell wall biogenesis; peptidoglycan biosynthesis. Functionally, cell wall formation. Catalyzes the transfer of a GlcNAc subunit on undecaprenyl-pyrophosphoryl-MurNAc-pentapeptide (lipid intermediate I) to form undecaprenyl-pyrophosphoryl-MurNAc-(pentapeptide)GlcNAc (lipid intermediate II). The sequence is that of UDP-N-acetylglucosamine--N-acetylmuramyl-(pentapeptide) pyrophosphoryl-undecaprenol N-acetylglucosamine transferase from Escherichia coli (strain K12 / MC4100 / BW2952).